We begin with the raw amino-acid sequence, 236 residues long: UPF0502 protein Bxeno_B1639 (236 aa).

The protein belongs to the UPF0502 family.

The polypeptide is UPF0502 protein Bxeno_B1639 (Paraburkholderia xenovorans (strain LB400)).